A 49-amino-acid chain; its full sequence is Large ribosomal subunit protein uL16 (49 aa).

It belongs to the universal ribosomal protein uL16 family. Part of the 50S ribosomal subunit.

Binds 23S rRNA and is also seen to make contacts with the A and possibly P site tRNAs. The protein is Large ribosomal subunit protein uL16 (rplP) of Aquifex pyrophilus.